A 162-amino-acid polypeptide reads, in one-letter code: 2-C-methyl-D-erythritol 2,4-cyclodiphosphate synthase (162 aa).

A divalent metal cation is bound by residues Asp10 and His12. Residues Asp10–His12 and His36–Ser37 each bind 4-CDP-2-C-methyl-D-erythritol 2-phosphate. Position 44 (His44) interacts with a divalent metal cation. 4-CDP-2-C-methyl-D-erythritol 2-phosphate contacts are provided by residues Asp58–Gly60, Phe63–Asp67, and Arg144.

Belongs to the IspF family. In terms of assembly, homotrimer. The cofactor is a divalent metal cation.

The catalysed reaction is 4-CDP-2-C-methyl-D-erythritol 2-phosphate = 2-C-methyl-D-erythritol 2,4-cyclic diphosphate + CMP. The protein operates within isoprenoid biosynthesis; isopentenyl diphosphate biosynthesis via DXP pathway; isopentenyl diphosphate from 1-deoxy-D-xylulose 5-phosphate: step 4/6. Functionally, involved in the biosynthesis of isopentenyl diphosphate (IPP) and dimethylallyl diphosphate (DMAPP), two major building blocks of isoprenoid compounds. Catalyzes the conversion of 4-diphosphocytidyl-2-C-methyl-D-erythritol 2-phosphate (CDP-ME2P) to 2-C-methyl-D-erythritol 2,4-cyclodiphosphate (ME-CPP) with a corresponding release of cytidine 5-monophosphate (CMP). The polypeptide is 2-C-methyl-D-erythritol 2,4-cyclodiphosphate synthase (Burkholderia thailandensis (strain ATCC 700388 / DSM 13276 / CCUG 48851 / CIP 106301 / E264)).